A 280-amino-acid polypeptide reads, in one-letter code: Adenosylcobinamide-GDP ribazoletransferase (280 aa).

7 helical membrane passes run 4-24 (YLLAFKSGFGFLSTIPVGITM), 34-54 (IFFYPVVGAVLGLLIGIVAYA), 58-78 (VFPGPVLAALIMGFVYYITGF), 108-128 (TLGTGGVAFGILVLLAFYGSI), 136-156 (IAAFGSNLPFLMFASMFIAEV), 197-217 (LIGFIFGAVVCCLPFGLIGLI), and 254-274 (ITALIVIAVTLKLSLNGYLGG).

Belongs to the CobS family. Mg(2+) serves as cofactor.

It is found in the cell membrane. It carries out the reaction alpha-ribazole + adenosylcob(III)inamide-GDP = adenosylcob(III)alamin + GMP + H(+). The catalysed reaction is alpha-ribazole 5'-phosphate + adenosylcob(III)inamide-GDP = adenosylcob(III)alamin 5'-phosphate + GMP + H(+). The protein operates within cofactor biosynthesis; adenosylcobalamin biosynthesis; adenosylcobalamin from cob(II)yrinate a,c-diamide: step 7/7. Joins adenosylcobinamide-GDP and alpha-ribazole to generate adenosylcobalamin (Ado-cobalamin). Also synthesizes adenosylcobalamin 5'-phosphate from adenosylcobinamide-GDP and alpha-ribazole 5'-phosphate. The chain is Adenosylcobinamide-GDP ribazoletransferase from Methanosarcina mazei (strain ATCC BAA-159 / DSM 3647 / Goe1 / Go1 / JCM 11833 / OCM 88) (Methanosarcina frisia).